Consider the following 150-residue polypeptide: Cytochrome b5 type B (150 aa).

The propeptide occupies 1–15; that stretch reads MSGSMATAEASGSDG. Residues 1 to 20 are disordered; it reads MSGSMATAEASGSDGKGQEV. Residue Ser-23 is modified to Phosphoserine. The Cytochrome b5 heme-binding domain maps to 24-100; sequence VTYYRLEEVA…LKQYYIGDIH (77 aa). An N6-acetyllysine modification is found at Lys-34. Position 37 is a phosphoserine (Ser-37). The residue at position 39 (Lys-39) is an N6-methyllysine. The heme site is built by His-59 and His-83. Ser-84 is subject to Phosphoserine. Residues 123 to 140 traverse the membrane as a helical segment; sequence WAYWILPIIGAVLLGFLY.

The protein belongs to the cytochrome b5 family. In terms of assembly, component of a complex composed of cytochrome b5, NADH-cytochrome b5 reductase (CYB5R3) and MTARC2.

It localises to the mitochondrion outer membrane. Its function is as follows. Cytochrome b5 is a membrane-bound hemoprotein functioning as an electron carrier for several membrane-bound oxygenases. The sequence is that of Cytochrome b5 type B (CYB5B) from Homo sapiens (Human).